The following is a 93-amino-acid chain: Protein YzgL (93 aa).

The protein is Protein YzgL (yzgL) of Escherichia coli (strain K12).